Reading from the N-terminus, the 332-residue chain is Acryloyl-coenzyme A reductase (332 aa).

Cys-38 is a Zn(2+) binding site. Tyr-39 is a binding site for NADP(+). Residues His-60, Asp-90, Cys-93, Cys-96, Cys-104, and Cys-146 each coordinate Zn(2+). NADP(+)-binding positions include 172–175 and 194–196; these read SGGV and TTS.

It belongs to the zinc-containing alcohol dehydrogenase family. Monomer. Zn(2+) serves as cofactor.

It catalyses the reaction propanoyl-CoA + NADP(+) = acryloyl-CoA + NADPH + H(+). Its function is as follows. Plays a role in autotrophic carbon fixation via the 3-hydroxypropionate/4-hydroxybutyrate cycle. Catalyzes the acryloyl-CoA dependent NADPH oxidation and formation of propionyl-CoA. This chain is Acryloyl-coenzyme A reductase, found in Metallosphaera sedula (strain ATCC 51363 / DSM 5348 / JCM 9185 / NBRC 15509 / TH2).